Here is a 545-residue protein sequence, read N- to C-terminus: Gamma-curcumene synthase (545 aa).

Positions 299, 303, 442, and 450 each coordinate Mg(2+). The DDXXD motif signature appears at 299-303 (DDTYD).

The protein belongs to the terpene synthase family. The cofactor is Mg(2+).

Its subcellular location is the cytoplasm. It is found in the cytosol. It carries out the reaction (2E,6E)-farnesyl diphosphate = gamma-curcumene + diphosphate. The protein operates within secondary metabolite biosynthesis; terpenoid biosynthesis. In terms of biological role, sesquiterpene synthase involved in gamma-curcumene biosynthesis. In Pogostemon cablin (Patchouli), this protein is Gamma-curcumene synthase.